Reading from the N-terminus, the 198-residue chain is Sporulation-specific protein 16 (198 aa).

Necessary for efficient spore formation. This Saccharomyces cerevisiae (strain ATCC 204508 / S288c) (Baker's yeast) protein is Sporulation-specific protein 16 (SPO16).